A 1324-amino-acid chain; its full sequence is Synaptojanin-1 (1324 aa).

The SAC domain occupies 119 to 442 (VRKVLNSGNF…GDSISKIYAG (324 aa)). A catalytic region spans residues 475–859 (AIDVLLLGNT…GRAELKTSDH (385 aa)). A phosphoserine mark is found at Ser-820 and Ser-830. Residues 902-971 (SSLPENNFFN…RTITITLKSP (70 aa)) form the RRM domain. Residues 1030–1324 (LQPSSSSALA…SDPFEDLSLN (295 aa)) are disordered. Over residues 1080 to 1103 (ASQSSPVDTLPATQLQQKDSSQTL) the composition is skewed to polar residues. A compositionally biased stretch (pro residues) spans 1108-1130 (PPPPRPVAPPARPAPPQRPPPPS). Positions 1138 to 1156 (ARERVWSTRKAQERPRRDN) are enriched in basic and acidic residues. Position 1186 is an omega-N-methylarginine (Arg-1186). Thr-1205 is modified (phosphothreonine). Ser-1277 bears the Phosphoserine mark. Residues 1278-1292 (SHSLPSDAPAAAAGA) are compositionally biased toward low complexity.

The protein belongs to the synaptojanin family. In the central section; belongs to the inositol 1,4,5-trisphosphate 5-phosphatase family. Interacts with ASH/GRB2. Interacts with PACSIN1, PACSIN2 and PACSIN3. Interacts with AMPH, SH3GL1, SH3GL2 and SH3GL3. Interacts with MYO1E (via SH3 domain). Interacts with BIN1 and DNM1. Interacts with EPS15. In terms of tissue distribution, ubiquitously expressed with highest levels in brain.

It localises to the cytoplasm. The protein localises to the perinuclear region. It catalyses the reaction a 1,2-diacyl-sn-glycero-3-phospho-(1D-myo-inositol-4,5-bisphosphate) + H2O = a 1,2-diacyl-sn-glycero-3-phospho-(1D-myo-inositol 4-phosphate) + phosphate. In terms of biological role, phosphatase that acts on various phosphoinositides, including phosphatidylinositol 4-phosphate, phosphatidylinositol (4,5)-bisphosphate and phosphatidylinositol (3,4,5)-trisphosphate. Has a role in clathrin-mediated endocytosis. Hydrolyzes PIP2 bound to actin regulatory proteins resulting in the rearrangement of actin filaments downstream of tyrosine kinase and ASH/GRB2. The polypeptide is Synaptojanin-1 (SYNJ1) (Bos taurus (Bovine)).